Reading from the N-terminus, the 314-residue chain is Ribosomal RNA large subunit methyltransferase F (314 aa).

This sequence belongs to the methyltransferase superfamily. METTL16/RlmF family.

It localises to the cytoplasm. The catalysed reaction is adenosine(1618) in 23S rRNA + S-adenosyl-L-methionine = N(6)-methyladenosine(1618) in 23S rRNA + S-adenosyl-L-homocysteine + H(+). Specifically methylates the adenine in position 1618 of 23S rRNA. In Flavobacterium psychrophilum (strain ATCC 49511 / DSM 21280 / CIP 103535 / JIP02/86), this protein is Ribosomal RNA large subunit methyltransferase F.